We begin with the raw amino-acid sequence, 306 residues long: Aspartate carbamoyltransferase catalytic subunit (306 aa).

Positions 51 and 52 each coordinate carbamoyl phosphate. Lys-79 provides a ligand contact to L-aspartate. Carbamoyl phosphate is bound by residues Arg-101, His-130, and Gln-133. Arg-163 and Arg-215 together coordinate L-aspartate. Carbamoyl phosphate-binding residues include Gly-256 and Pro-257.

Belongs to the aspartate/ornithine carbamoyltransferase superfamily. ATCase family. Heterododecamer (2C3:3R2) of six catalytic PyrB chains organized as two trimers (C3), and six regulatory PyrI chains organized as three dimers (R2).

The catalysed reaction is carbamoyl phosphate + L-aspartate = N-carbamoyl-L-aspartate + phosphate + H(+). It functions in the pathway pyrimidine metabolism; UMP biosynthesis via de novo pathway; (S)-dihydroorotate from bicarbonate: step 2/3. Its function is as follows. Catalyzes the condensation of carbamoyl phosphate and aspartate to form carbamoyl aspartate and inorganic phosphate, the committed step in the de novo pyrimidine nucleotide biosynthesis pathway. This chain is Aspartate carbamoyltransferase catalytic subunit, found in Ehrlichia ruminantium (strain Welgevonden).